We begin with the raw amino-acid sequence, 324 residues long: UDP-N-acetylenolpyruvoylglucosamine reductase (324 aa).

The FAD-binding PCMH-type domain occupies 36–217 (FRAGGLAELM…IRAEMDAVRA (182 aa)). Arg183 is an active-site residue. Residue Ser232 is the Proton donor of the active site. Glu302 is a catalytic residue.

This sequence belongs to the MurB family. FAD serves as cofactor.

The protein resides in the cytoplasm. It catalyses the reaction UDP-N-acetyl-alpha-D-muramate + NADP(+) = UDP-N-acetyl-3-O-(1-carboxyvinyl)-alpha-D-glucosamine + NADPH + H(+). Its pathway is cell wall biogenesis; peptidoglycan biosynthesis. Functionally, cell wall formation. In Rhizobium rhizogenes (strain K84 / ATCC BAA-868) (Agrobacterium radiobacter), this protein is UDP-N-acetylenolpyruvoylglucosamine reductase.